Here is a 346-residue protein sequence, read N- to C-terminus: NADH-ubiquinone oxidoreductase chain 2 (346 aa).

11 helical membrane passes run 1–21, 25–45, 60–80, 95–115, 124–144, 149–169, 178–195, 200–219, 242–262, 274–294, and 326–346; these read MNPH…TITI, HWVL…PLIS, FLTQ…NAWA, CLLL…HFWF, LMTA…LLLM, LNPA…GWMG, ILAF…IILV, LALL…FMAL, ATLM…GFMP, EMTP…FFYL, and AILA…HAIV.

It belongs to the complex I subunit 2 family.

It localises to the mitochondrion inner membrane. It catalyses the reaction a ubiquinone + NADH + 5 H(+)(in) = a ubiquinol + NAD(+) + 4 H(+)(out). Core subunit of the mitochondrial membrane respiratory chain NADH dehydrogenase (Complex I) that is believed to belong to the minimal assembly required for catalysis. Complex I functions in the transfer of electrons from NADH to the respiratory chain. The immediate electron acceptor for the enzyme is believed to be ubiquinone. In Mareca falcata (Falcated duck), this protein is NADH-ubiquinone oxidoreductase chain 2 (MT-ND2).